The following is a 562-amino-acid chain: NAD-dependent malic enzyme (562 aa).

The active-site Proton donor is tyrosine 101. Arginine 154 lines the NAD(+) pocket. The active-site Proton acceptor is the lysine 172. The a divalent metal cation site is built by glutamate 243, aspartate 244, and aspartate 267. NAD(+) contacts are provided by aspartate 267 and asparagine 415.

It belongs to the malic enzymes family. As to quaternary structure, homotetramer. It depends on Mg(2+) as a cofactor. Requires Mn(2+) as cofactor.

It catalyses the reaction (S)-malate + NAD(+) = pyruvate + CO2 + NADH. The enzyme catalyses oxaloacetate + H(+) = pyruvate + CO2. The polypeptide is NAD-dependent malic enzyme (Shewanella baltica (strain OS223)).